Reading from the N-terminus, the 2302-residue chain is Phosphatidylinositol phosphatase PTPRQ (2302 aa).

The signal sequence occupies residues 1 to 18 (MMDFHFSFLFLLIGTSES). The Extracellular portion of the chain corresponds to 19 to 1908 (QVDVSSSFDG…GEGLSERTVE (1890 aa)). An N-linked (GlcNAc...) asparagine glycan is attached at Asn-54. 17 consecutive Fibronectin type-III domains span residues 60-155 (PPVF…TAES), 159-254 (KVVN…SSST), 310-398 (PPQN…PPDV), 401-501 (AVFD…PHND), 474-566 (GFYE…TVRT), 570-665 (VPSS…TPED), 670-759 (SPQD…TSET), 764-854 (APEN…TEED), 859-948 (PPQN…TPEG), 953-1053 (PPND…TDQD), 1058-1151 (PVGN…TEED), 1156-1243 (PPII…TDES), 1248-1341 (PPQN…TQES), 1345-1431 (AVRN…LPET), 1435-1539 (APTN…TLPG), 1544-1642 (PPEN…TLES), and 1647-1748 (PPNN…IKAP). Residues Asn-162, Asn-169, Asn-318, Asn-354, and Asn-389 are each glycosylated (N-linked (GlcNAc...) asparagine). N-linked (GlcNAc...) asparagine glycosylation is found at Asn-733 and Asn-746. 4 N-linked (GlcNAc...) asparagine glycosylation sites follow: Asn-904, Asn-998, Asn-1010, and Asn-1040. 2 N-linked (GlcNAc...) asparagine glycosylation sites follow: Asn-1251 and Asn-1256. An N-linked (GlcNAc...) asparagine glycan is attached at Asn-1805. The helical transmembrane segment at 1909 to 1929 (IILSVTLCILSIILLGTAIFA) threads the bilayer. At 1930 to 2302 (FVRIRQKQKE…VELEWEETTM (373 aa)) the chain is on the cytoplasmic side. The region spanning 2006–2262 (FQEEFSELPK…IFLHQCILDL (257 aa)) is the Tyrosine-protein phosphatase domain. Residue Cys-2203 is the Phosphocysteine intermediate of the active site.

It belongs to the protein-tyrosine phosphatase family. Receptor class 2A subfamily. Interacts with TPRN. TPRN, CLIC5 and PTPQR form concentric rings at the base of stereocilia and may form a complex.

It is found in the cell projection. The protein resides in the stereocilium. Its subcellular location is the apical cell membrane. It localises to the basal cell membrane. The catalysed reaction is a 1,2-diacyl-sn-glycero-3-phospho-(1D-myo-inositol-3,4,5-trisphosphate) + H2O = a 1,2-diacyl-sn-glycero-3-phospho-(1D-myo-inositol-4,5-bisphosphate) + phosphate. The enzyme catalyses a 1,2-diacyl-sn-glycero-3-phospho-(1D-myo-inositol-3,4,5-trisphosphate) + H2O = a 1,2-diacyl-sn-glycero-3-phospho-(1D-myo-inositol-3,4-bisphosphate) + phosphate. It carries out the reaction a 1,2-diacyl-sn-glycero-3-phospho-(1D-myo-inositol-3,5-bisphosphate) + H2O = a 1,2-diacyl-sn-glycero-3-phospho-(1D-myo-inositol-5-phosphate) + phosphate. It catalyses the reaction a 1,2-diacyl-sn-glycero-3-phospho-(1D-myo-inositol-3,5-bisphosphate) + H2O = a 1,2-diacyl-sn-glycero-3-phospho-(1D-myo-inositol-3-phosphate) + phosphate. The catalysed reaction is a 1,2-diacyl-sn-glycero-3-phospho-(1D-myo-inositol-4,5-bisphosphate) + H2O = a 1,2-diacyl-sn-glycero-3-phospho-(1D-myo-inositol 4-phosphate) + phosphate. Its function is as follows. Dephosphorylates phosphatidylinositol phosphates, such as phosphatidylinositol 3,4,5-trisphosphate (PIP3) and phosphatidylinositol 3,5-diphosphates, with preference for PIP3. Phosphate can be hydrolyzed from the D3 and D5 positions in the inositol ring. Has low tyrosine-protein phosphatase activity in vitro; however, the relevance of such activity in vivo is unclear. Plays an important role in adipogenesis of mesenchymal stem cells (MSCs). Regulates the phosphorylation state of AKT1 by regulating the levels of PIP3 level in MSCs and preadipocyte cells. Required for hair bundle maturation, a process that enables hair cells to detect and transmit sound and balance signals effectively, therefore affecting auditory function. May act by regulating the level of phosphatidylinositol 4,5-bisphosphate (PIP2) level in the basal region of hair bundles. The protein is Phosphatidylinositol phosphatase PTPRQ (Ptprq) of Rattus norvegicus (Rat).